A 632-amino-acid polypeptide reads, in one-letter code: MTQQTMSFQAEVKQLLHLMIHSLYSNKEIFLRELVSNASDAADKLRFEALENNALYESDPNLRIRLSFDKAARTITIDDNGIGMSRDEAIANLGTIARSGTKEFFSKLSGDQQKDAALIGQFGVGFYSGFIVADRITVETRRAGLPASEGVRWESAGEGDFQVDTIERAARGTTITLHLREGEDELLSSYRLKSIVQKYSDHVALPILMKKEEWDQEKGEMVEKDEDETINQASALWTRAKSEVTDEQYKQFYQHVAHDHQDPLAWTHNRVEGRSEYTQLLFVPSHAPFDLWNRDYRGGLKLYVKRVFIMDDAEQLLPQYLRFIKGVVDSSDLPLNVSREILQESRDVKAIREGVTKRALSMLEELANAEDDAGKEKYKTFWSAFGQVLKEGVGEDHANRERVAKLLRFASTHGDTDAQDVALADYVARMKPEQTKIYYVTADTWQAAKNSPHLEVFRKKGVEVLLLTDRVDEWMLSFLHEFDGKPLASVARGDLDLGALNDDEKKAQEETGEAMKPVVDKMKETLGEKVKDVRVTFRLTDSPSCLVADDNDMSGYLQRMLKAAGQSAPSFQPILEINPEHPLVKALKADGADFGDWCHLLFDQALLAEGGALEDPASFVKRTNALLLSRAA.

The tract at residues 1–339 (MTQQTMSFQA…SSDLPLNVSR (339 aa)) is a; substrate-binding. The segment at 340–559 (EILQESRDVK…DNDMSGYLQR (220 aa)) is b. A c region spans residues 560-632 (MLKAAGQSAP…TNALLLSRAA (73 aa)).

The protein belongs to the heat shock protein 90 family. In terms of assembly, homodimer.

It is found in the cytoplasm. Molecular chaperone. Has ATPase activity. The sequence is that of Chaperone protein HtpG from Burkholderia mallei (strain NCTC 10247).